We begin with the raw amino-acid sequence, 471 residues long: Alpha-galactosidase 6 (471 aa).

The signal sequence occupies residues 1-18 (MFAFYFLTACISLKGVFG). Cys42 and Cys74 are oxidised to a cystine. 2 residues coordinate substrate: Asp72 and Asp73. An N-linked (GlcNAc...) asparagine glycan is attached at Asn105. A disulfide bridge links Cys121 with Cys151. Lys147 contributes to the substrate binding site. The active-site Nucleophile is the Asp149. N-linked (GlcNAc...) asparagine glycosylation occurs at Asn175. Residue Arg205 participates in substrate binding. Catalysis depends on Asp209, which acts as the Proton donor. Cystine bridges form between Cys221–Cys237 and Cys223–Cys230. Residue Gln251 participates in substrate binding. N-linked (GlcNAc...) asparagine glycosylation is found at Asn270, Asn370, Asn403, Asn422, Asn435, and Asn454.

This sequence belongs to the glycosyl hydrolase 27 family. As to quaternary structure, homotetramer.

It is found in the secreted. It catalyses the reaction Hydrolysis of terminal, non-reducing alpha-D-galactose residues in alpha-D-galactosides, including galactose oligosaccharides, galactomannans and galactolipids.. This chain is Alpha-galactosidase 6 (MEL6), found in Saccharomyces cerevisiae (Baker's yeast).